Reading from the N-terminus, the 716-residue chain is Mitogen-activated protein kinase kinase kinase 5 (716 aa).

Residues 1 to 27 show a composition bias toward low complexity; sequence MRWLPQISFSSPSSSPSSSLKPVASYS. Disordered regions lie at residues 1–42, 74–98, 119–180, and 238–302; these read MRWL…DRFH, ASTSSSTFDSGLTRSPSAFTAVPRS, AANA…YWVN, and YDIT…VTNG. A compositionally biased stretch (basic and acidic residues) spans 31-40; it reads DPDRNQDRDR. Residues 75–91 show a composition bias toward polar residues; the sequence is STSSSTFDSGLTRSPSA. Residues 124 to 137 are compositionally biased toward basic and acidic residues; sequence GLDDRDRDPERLIS. 3 stretches are compositionally biased toward polar residues: residues 138–150, 162–173, and 242–251; these read DRTSSGPPLTSVN, ENSSYQDFSPRN, and AFSTDNSPIH. Residues 263 to 273 are compositionally biased toward low complexity; sequence RSPQPSRPSSP. Residues 346 to 607 form the Protein kinase domain; sequence WKKGKLIGRG…ASMLLEHRFL (262 aa). ATP-binding positions include 352–360 and Lys375; that span reads IGRGTFGSV. Asp472 acts as the Proton acceptor in catalysis. A compositionally biased stretch (polar residues) spans 610–633; it reads SLQPTSPSNSDVSQLFNGMNITEP. Residues 610–716 are disordered; sequence SLQPTSPSNS…RRTGVTSDHL (107 aa). Ser617 and Ser622 each carry phosphoserine; by PBL27. Over residues 634 to 648 the composition is skewed to basic and acidic residues; sequence SSRREKPNFKLDQVP. Composition is skewed to polar residues over residues 652 to 661 and 674 to 685; these read NMTSSESESG and LTGTVNRLSPRS. Ser658 and Ser660 each carry phosphoserine; by PBL27. Thr677 bears the Phosphothreonine; by PBL27 mark. Ser685 is subject to Phosphoserine; by PBL27. The span at 703-716 shows a compositional bias: basic and acidic residues; it reads SSDRRRTGVTSDHL.

The protein belongs to the protein kinase superfamily. STE Ser/Thr protein kinase family. MAP kinase kinase kinase subfamily. As to quaternary structure, interacts with PBL27 at the plasma membrane; disassociation is induced by chitin perception by the CERK1 complex. Interacts with MKK2, MKK4, and MKK5 mainly in the cytosol. In terms of processing, phosphorylated by PBL27 during chitin-mediated signaling in a CERK1-dependent manner. As to expression, mostly expressed in flower buds. Also present in pollen, roots, leaves and seedlings, and, at low levels, in stems and immature siliques.

The protein localises to the cell membrane. It localises to the cytoplasm. It is found in the cytosol. The enzyme catalyses L-seryl-[protein] + ATP = O-phospho-L-seryl-[protein] + ADP + H(+). It catalyses the reaction L-threonyl-[protein] + ATP = O-phospho-L-threonyl-[protein] + ADP + H(+). Functionally, mitogen-activated protein kinase (MAPK) involved in the transduction of signal between the host cell surface chitin receptor complex CERK1-LYK5 and the intracellular MAPK cascade that leads to chitin-induced immunity. Phosphorylates and activates MAPK targets (e.g. MKK4, MKK5, and possibly MKK2) when phosphorylated by PBL27 after elicitation by chitin. Required for resistance to the fungus A.brassicicola. This Arabidopsis thaliana (Mouse-ear cress) protein is Mitogen-activated protein kinase kinase kinase 5.